Here is a 108-residue protein sequence, read N- to C-terminus: Holo-[acyl-carrier-protein] synthase (108 aa).

Positions 9 and 52 each coordinate Mg(2+).

Belongs to the P-Pant transferase superfamily. AcpS family. It depends on Mg(2+) as a cofactor.

It is found in the cytoplasm. It carries out the reaction apo-[ACP] + CoA = holo-[ACP] + adenosine 3',5'-bisphosphate + H(+). Transfers the 4'-phosphopantetheine moiety from coenzyme A to a Ser of acyl-carrier-protein. In Coprothermobacter proteolyticus (strain ATCC 35245 / DSM 5265 / OCM 4 / BT), this protein is Holo-[acyl-carrier-protein] synthase.